The following is a 619-amino-acid chain: Chaperone protein HscA homolog (619 aa).

The protein belongs to the heat shock protein 70 family.

Its function is as follows. Chaperone involved in the maturation of iron-sulfur cluster-containing proteins. Has a low intrinsic ATPase activity which is markedly stimulated by HscB. The protein is Chaperone protein HscA homolog of Acinetobacter baumannii (strain ACICU).